We begin with the raw amino-acid sequence, 173 residues long: Protein PLASTID REDOX INSENSITIVE 2, chloroplastic (173 aa).

The N-terminal 55 residues, 1–55 (MATRAWVAAAVALNPQLLPLRSCSPTKSVSPAQRSASMGLRLRSGRPCLGKFVCR), are a transit peptide targeting the chloroplast.

Its subcellular location is the plastid. The protein resides in the chloroplast stroma. It localises to the chloroplast nucleoid. In terms of biological role, required for the activity of the plastid-encoded RNA polymerase (PEP) and full expression of genes transcribed by PEP. This chain is Protein PLASTID REDOX INSENSITIVE 2, chloroplastic, found in Zea mays (Maize).